We begin with the raw amino-acid sequence, 282 residues long: PAK4-inhibitor INKA1 (282 aa).

2 disordered regions span residues arginine 21 to alanine 50 and glycine 92 to serine 127. Inka box stretches follow at residues glutamate 163–glutamate 200 and proline 256–leucine 282.

It belongs to the INKA family. In terms of assembly, interacts with PAK4. Expressed in tissues of the developing head during neurulation.

It localises to the nucleus. The protein localises to the cytoplasm. Functionally, inhibitor of the serine/threonine-protein kinase PAK4. Acts by binding PAK4 in a substrate-like manner, inhibiting the protein kinase activity. This chain is PAK4-inhibitor INKA1, found in Mus musculus (Mouse).